The following is a 577-amino-acid chain: Urease subunit alpha (577 aa).

The 442-residue stretch at Gly136–Phe577 folds into the Urease domain. Residues His141, His143, and Lys224 each contribute to the Ni(2+) site. Lys224 carries the post-translational modification N6-carboxylysine. His226 contacts substrate. Ni(2+)-binding residues include His253 and His279. His327 functions as the Proton donor in the catalytic mechanism. A Ni(2+)-binding site is contributed by Asp367.

The protein belongs to the metallo-dependent hydrolases superfamily. Urease alpha subunit family. In terms of assembly, heterotrimer of UreA (gamma), UreB (beta) and UreC (alpha) subunits. Three heterotrimers associate to form the active enzyme. Ni cation is required as a cofactor. Post-translationally, carboxylation allows a single lysine to coordinate two nickel ions.

The protein localises to the cytoplasm. The enzyme catalyses urea + 2 H2O + H(+) = hydrogencarbonate + 2 NH4(+). It participates in nitrogen metabolism; urea degradation; CO(2) and NH(3) from urea (urease route): step 1/1. This chain is Urease subunit alpha, found in Mycobacterium marinum (strain ATCC BAA-535 / M).